Reading from the N-terminus, the 475-residue chain is Ribulose bisphosphate carboxylase large chain (475 aa).

The propeptide occupies 1–2 (MA). An N-acetylproline modification is found at Pro3. The residue at position 14 (Lys14) is an N6,N6,N6-trimethyllysine. The substrate site is built by Asn123 and Thr173. Lys175 serves as the catalytic Proton acceptor. Position 177 (Lys177) interacts with substrate. Lys201, Asp203, and Glu204 together coordinate Mg(2+). An N6-carboxylysine modification is found at Lys201. His294 serves as the catalytic Proton acceptor. Substrate-binding residues include Arg295, His327, and Ser379.

It belongs to the RuBisCO large chain family. Type I subfamily. Heterohexadecamer of 8 large chains and 8 small chains; disulfide-linked. The disulfide link is formed within the large subunit homodimers. Mg(2+) is required as a cofactor. In terms of processing, the disulfide bond which can form in the large chain dimeric partners within the hexadecamer appears to be associated with oxidative stress and protein turnover.

The protein resides in the plastid. The protein localises to the chloroplast. The enzyme catalyses 2 (2R)-3-phosphoglycerate + 2 H(+) = D-ribulose 1,5-bisphosphate + CO2 + H2O. It carries out the reaction D-ribulose 1,5-bisphosphate + O2 = 2-phosphoglycolate + (2R)-3-phosphoglycerate + 2 H(+). RuBisCO catalyzes two reactions: the carboxylation of D-ribulose 1,5-bisphosphate, the primary event in carbon dioxide fixation, as well as the oxidative fragmentation of the pentose substrate in the photorespiration process. Both reactions occur simultaneously and in competition at the same active site. In Bryopsis maxima (Green alga), this protein is Ribulose bisphosphate carboxylase large chain.